Here is a 267-residue protein sequence, read N- to C-terminus: Auxin-responsive protein IAA18 (267 aa).

Positions 42–46 (LELKL) match the EAR-like (transcriptional repression) motif. Residues 81-101 (PSSTKTTSHKRTAPGPVVGWP) form a disordered region. The region spanning 149–248 (GMFVKINMYG…SVKRLRVIKT (100 aa)) is the PB1 domain.

It belongs to the Aux/IAA family. In terms of assembly, homodimers and heterodimers. Interacts with TPL.

The protein resides in the nucleus. Functionally, aux/IAA proteins are short-lived transcriptional factors that function as repressors of early auxin response genes at low auxin concentrations. Repression is thought to result from the interaction with auxin response factors (ARFs), proteins that bind to the auxin-responsive promoter element (AuxRE). Formation of heterodimers with ARF proteins may alter their ability to modulate early auxin response genes expression. The sequence is that of Auxin-responsive protein IAA18 (IAA18) from Arabidopsis thaliana (Mouse-ear cress).